The following is a 187-amino-acid chain: Transcriptional repressor NrdR (187 aa).

Residues 3 to 34 (CPFCRHPDSRVVDSRTTDDGTSIRRRRQCPDC) fold into a zinc finger. Residues 46–136 (LMVVKRSGVT…VYRAFDSLED (91 aa)) form the ATP-cone domain. A disordered region spans residues 146 to 187 (EEQRERPAVDDEDHEDAGAERQGTDRGSGGTVEVPVPATVAD).

It belongs to the NrdR family. Zn(2+) serves as cofactor.

Negatively regulates transcription of bacterial ribonucleotide reductase nrd genes and operons by binding to NrdR-boxes. The chain is Transcriptional repressor NrdR from Streptomyces avermitilis (strain ATCC 31267 / DSM 46492 / JCM 5070 / NBRC 14893 / NCIMB 12804 / NRRL 8165 / MA-4680).